Consider the following 388-residue polypeptide: Biotin synthase (388 aa).

The 231-residue stretch at 47-277 folds into the Radical SAM core domain; it reads WFGRRVKLNY…DVEVRIAGGR (231 aa). Residues cysteine 65, cysteine 69, and cysteine 72 each coordinate [4Fe-4S] cluster. [2Fe-2S] cluster is bound by residues cysteine 109, cysteine 142, cysteine 202, and arginine 272. Residues 335-371 form a disordered region; it reads APAGGCGSEQSAGCGSHEGGGACGSAPAPRTDEARTD.

This sequence belongs to the radical SAM superfamily. Biotin synthase family. Homodimer. [4Fe-4S] cluster is required as a cofactor. The cofactor is [2Fe-2S] cluster.

The catalysed reaction is (4R,5S)-dethiobiotin + (sulfur carrier)-SH + 2 reduced [2Fe-2S]-[ferredoxin] + 2 S-adenosyl-L-methionine = (sulfur carrier)-H + biotin + 2 5'-deoxyadenosine + 2 L-methionine + 2 oxidized [2Fe-2S]-[ferredoxin]. It participates in cofactor biosynthesis; biotin biosynthesis; biotin from 7,8-diaminononanoate: step 2/2. Catalyzes the conversion of dethiobiotin (DTB) to biotin by the insertion of a sulfur atom into dethiobiotin via a radical-based mechanism. The chain is Biotin synthase from Streptomyces avermitilis (strain ATCC 31267 / DSM 46492 / JCM 5070 / NBRC 14893 / NCIMB 12804 / NRRL 8165 / MA-4680).